The primary structure comprises 501 residues: Aldehyde dehydrogenase 1A1 (501 aa).

Ser-2 carries the post-translational modification N-acetylserine. Residues Lys-91 and Lys-128 each carry the N6-acetyllysine modification. Residues 167 to 170 (IPWN), 193 to 196 (KPAE), 226 to 227 (GP), and 246 to 247 (GS) each bind NAD(+). N6-acetyllysine is present on Lys-252. Catalysis depends on Glu-269, which acts as the Proton acceptor. Residue 269-271 (ELG) coordinates NAD(+). Cys-303 serves as the catalytic Nucleophile. A mediates interaction with PRMT3 region spans residues 336–501 (LTPGVSQGPQ…VTIKISQKNS (166 aa)). A Phosphothreonine modification is found at Thr-337. 349–353 (EQYEK) contacts NAD(+). An N6-acetyllysine mark is found at Lys-353 and Lys-367. 400 to 402 (EIF) lines the NAD(+) pocket. Lys-410 carries the N6-acetyllysine modification. Residue Ser-413 is modified to Phosphoserine. Lys-419 and Lys-495 each carry N6-acetyllysine.

The protein belongs to the aldehyde dehydrogenase family. In terms of assembly, homotetramer. Interacts with PRMT3; the interaction is direct, inhibits ALDH1A1 aldehyde dehydrogenase activity and is independent of the methyltransferase activity of PRMT3. Post-translationally, the N-terminus is blocked most probably by acetylation. As to expression, expressed in muscle, liver, small intestine, kidney, brain, lung, heart but not detected in erythrocytes (at protein level).

It is found in the cytoplasm. It localises to the cytosol. Its subcellular location is the cell projection. The protein resides in the axon. The catalysed reaction is an aldehyde + NAD(+) + H2O = a carboxylate + NADH + 2 H(+). It catalyses the reaction all-trans-retinal + NAD(+) + H2O = all-trans-retinoate + NADH + 2 H(+). It carries out the reaction 9-cis-retinal + NAD(+) + H2O = 9-cis-retinoate + NADH + 2 H(+). The enzyme catalyses 11-cis-retinal + NAD(+) + H2O = 11-cis-retinoate + NADH + 2 H(+). The catalysed reaction is 13-cis-retinal + NAD(+) + H2O = 13-cis-retinoate + NADH + 2 H(+). It catalyses the reaction 3-deoxyglucosone + NAD(+) + H2O = 2-dehydro-3-deoxy-D-gluconate + NADH + 2 H(+). It carries out the reaction (E)-4-hydroxynon-2-enal + NAD(+) + H2O = (E)-4-hydroxynon-2-enoate + NADH + 2 H(+). The enzyme catalyses malonaldehyde + NAD(+) + H2O = 3-oxopropanoate + NADH + 2 H(+). The catalysed reaction is hexanal + NAD(+) + H2O = hexanoate + NADH + 2 H(+). It catalyses the reaction propanal + NAD(+) + H2O = propanoate + NADH + 2 H(+). It carries out the reaction acetaldehyde + NAD(+) + H2O = acetate + NADH + 2 H(+). The enzyme catalyses benzaldehyde + NAD(+) + H2O = benzoate + NADH + 2 H(+). The catalysed reaction is 4-aminobutanal + NAD(+) + H2O = 4-aminobutanoate + NADH + 2 H(+). The protein operates within cofactor metabolism; retinol metabolism. In terms of biological role, cytosolic dehydrogenase that catalyzes the irreversible oxidation of a wide range of aldehydes to their corresponding carboxylic acid. Functions downstream of retinol dehydrogenases and catalyzes the oxidation of retinaldehyde into retinoic acid, the second step in the oxidation of retinol/vitamin A into retinoic acid. This pathway is crucial to control the levels of retinol and retinoic acid, two important molecules which excess can be teratogenic and cytotoxic. Also oxidizes aldehydes resulting from lipid peroxidation like (E)-4-hydroxynon-2-enal/HNE, malonaldehyde and hexanal that form protein adducts and are highly cytotoxic. By participating for instance to the clearance of (E)-4-hydroxynon-2-enal/HNE in the lens epithelium prevents the formation of HNE-protein adducts and lens opacification. Also functions downstream of fructosamine-3-kinase in the fructosamine degradation pathway by catalyzing the oxidation of 3-deoxyglucosone, the carbohydrate product of fructosamine 3-phosphate decomposition, which is itself a potent glycating agent that may react with lysine and arginine side-chains of proteins. Also has an aminobutyraldehyde dehydrogenase activity and is probably part of an alternative pathway for the biosynthesis of GABA/4-aminobutanoate in midbrain, thereby playing a role in GABAergic synaptic transmission. This is Aldehyde dehydrogenase 1A1 from Bos taurus (Bovine).